A 782-amino-acid polypeptide reads, in one-letter code: uncharacterized protein (782 aa).

Disordered regions lie at residues 1 to 127 (MTTT…SAMK), 205 to 234 (NAAA…SYNP), and 308 to 355 (PYNF…SYLR). Basic and acidic residues predominate over residues 24 to 54 (KPQEEPTMKDKALLFEKQRQEKKMKHTEAKM). The segment covering 82–118 (KNVNNATSTNNATSTKNNTKNTPKNTPKNIPKNTTAK) has biased composition (low complexity). Over residues 312 to 324 (ARNNHGSDVSSAM) the composition is skewed to polar residues. Residues 326–336 (NARRQASETRR) are compositionally biased toward basic and acidic residues. Residues 337 to 346 (SNLSSYNDRN) show a composition bias toward polar residues. Residues 361–628 (MEKIRTEVDK…ERLRERLREL (268 aa)) are a coiled coil. Basic and acidic residues predominate over residues 629–668 (GSRDRSYNRSSRDRSHDRLYERSPRSRDRSSRDRSRDRYS). The disordered stretch occupies residues 629-689 (GSRDRSYNRS…SDSVKDYSVG (61 aa)). Over residues 669-678 (RSRSRSRYRR) the composition is skewed to basic residues. Positions 679-689 (RSDSVKDYSVG) are enriched in basic and acidic residues.

This is an uncharacterized protein from Yarrowia lipolytica (strain CLIB 122 / E 150) (Yeast).